The primary structure comprises 343 residues: SH2 domain-containing adapter protein D (343 aa).

The disordered stretch occupies residues 1–176 (MAKWLRDYLN…PADEYDQPWE (176 aa)). 2 stretches are compositionally biased toward basic and acidic residues: residues 29 to 40 (DILRAYREQKDL) and 73 to 82 (IKVEAADMAR). The span at 92-102 (EEPEAETEYSD) shows a compositional bias: acidic residues. Over residues 160–176 (RPLEDERPADEYDQPWE) the composition is skewed to basic and acidic residues. An SH2 domain is found at 225–320 (WFHGPLSRAE…AEHLALLYPV (96 aa)). Positions 322-343 (SSQSSQGPCTLAAKPERGQGDP) are disordered.

Tyrosine phosphorylated by ABL. Specifically expressed in brain.

Functionally, may function as an adapter protein. In Mus musculus (Mouse), this protein is SH2 domain-containing adapter protein D (Shd).